A 369-amino-acid chain; its full sequence is Anhydro-N-acetylmuramic acid kinase (369 aa).

12–19 (GTSMDGVD) lines the ATP pocket.

Belongs to the anhydro-N-acetylmuramic acid kinase family.

The catalysed reaction is 1,6-anhydro-N-acetyl-beta-muramate + ATP + H2O = N-acetyl-D-muramate 6-phosphate + ADP + H(+). The protein operates within amino-sugar metabolism; 1,6-anhydro-N-acetylmuramate degradation. It participates in cell wall biogenesis; peptidoglycan recycling. Its function is as follows. Catalyzes the specific phosphorylation of 1,6-anhydro-N-acetylmuramic acid (anhMurNAc) with the simultaneous cleavage of the 1,6-anhydro ring, generating MurNAc-6-P. Is required for the utilization of anhMurNAc either imported from the medium or derived from its own cell wall murein, and thus plays a role in cell wall recycling. The sequence is that of Anhydro-N-acetylmuramic acid kinase from Shewanella baltica (strain OS223).